The primary structure comprises 182 residues: ATP synthase subunit delta (182 aa).

It belongs to the ATPase delta chain family. As to quaternary structure, F-type ATPases have 2 components, F(1) - the catalytic core - and F(0) - the membrane proton channel. F(1) has five subunits: alpha(3), beta(3), gamma(1), delta(1), epsilon(1). F(0) has three main subunits: a(1), b(2) and c(10-14). The alpha and beta chains form an alternating ring which encloses part of the gamma chain. F(1) is attached to F(0) by a central stalk formed by the gamma and epsilon chains, while a peripheral stalk is formed by the delta and b chains.

It localises to the cell membrane. F(1)F(0) ATP synthase produces ATP from ADP in the presence of a proton or sodium gradient. F-type ATPases consist of two structural domains, F(1) containing the extramembraneous catalytic core and F(0) containing the membrane proton channel, linked together by a central stalk and a peripheral stalk. During catalysis, ATP synthesis in the catalytic domain of F(1) is coupled via a rotary mechanism of the central stalk subunits to proton translocation. Functionally, this protein is part of the stalk that links CF(0) to CF(1). It either transmits conformational changes from CF(0) to CF(1) or is implicated in proton conduction. This chain is ATP synthase subunit delta, found in Alkalihalophilus pseudofirmus (strain ATCC BAA-2126 / JCM 17055 / OF4) (Bacillus pseudofirmus).